Consider the following 251-residue polypeptide: Capsid protein (251 aa).

Residues 3–20 carry the Bipartite nuclear localization signal motif; that stretch reads KRDLPWRSMAGTSKVSRN. Residues 35 to 49 carry the Nuclear localization signal motif; it reads KAAEWVNRPMYRKPR. A zinc finger lies at 63–80; sequence CEGPCKVQSFEQRHDISH. A Nuclear export signal motif is present at residues 96–117; that stretch reads ITHRVGKRFCVKSVYILGKIWM. The Bipartite nuclear localization signal signature appears at 195-242; it reads KRFWKVNNHVVYNHQEAGKYENHTENALLLYMACTHASNPVYATLKIR.

Belongs to the geminiviridae capsid protein family. Homomultimer. Binds to single-stranded and double-stranded viral DNA. Interacts (via nuclear localization signals) with host importin alpha-1a.

It localises to the virion. The protein resides in the host nucleus. In terms of biological role, encapsidates the viral DNA into characteristic twinned ('geminate') particles. Binds the genomic viral ssDNA and shuttles it into and out of the cell nucleus. The CP of bipartite geminiviruses is not required for cell-to-cell or systemic movement. The protein is Capsid protein of Tomato mottle virus (isolate Florida) (ToMoV).